Reading from the N-terminus, the 338-residue chain is uncharacterized protein (338 aa).

One can recognise a Radical SAM core domain in the interval 111–334 (HLGEERVLVP…LELAEKYNLD (224 aa)). 3 residues coordinate [4Fe-4S] cluster: C129, C133, and C136.

[4Fe-4S] cluster is required as a cofactor.

This is an uncharacterized protein from Methanocaldococcus jannaschii (strain ATCC 43067 / DSM 2661 / JAL-1 / JCM 10045 / NBRC 100440) (Methanococcus jannaschii).